The following is a 555-amino-acid chain: MGNTVHRTLPDPSPPARLLATRPCCGPGPERRPVLGEAPRFHAQAKGKNVRLDGHSRRATRRNSFCNGVTFTQRPIRLYEQVRLRLVAVRPGWSGALRFGFTAHDPSLMSAQDIPKYACPDLVTRPGYWAKALPENLALRDTVLAYWADRHGRVFYSVNDGEPVLFHCGVAVGGPLWALIDVYGITDEVQLLESAFADTLTPARLSQARFSACLPPSSHDAANFDNNELENNQVVAKLGHLALGRAPGPPPADAAAAAIPCGPRERPRPASSPALLEADLRFHATRGPDVSLSADRKVACAPRPDGGRTLVFSERPLRPGESLFVEVGRPGLAAPGALAFGITSCDPGVLRPNELPADPDALLDRKEYWVVARAGPVPSGGDALSFTLRPGGDVLLGINGRPRGRLLCVDTTQALWAFFAVRGGVAGQLRLLGTLQSSPATTTPSGSLSGSQDDSDSDMTFSVNQSSSASESSLVTAPSSPLSPPVSPVFSPPEPAGIKNGECTVCFDGEVDTVIYTCGHMCLCHSCGLRLKRQARACCPICRRPIKDVIKIYRP.

Residues 38-194 (APRFHAQAKG…ITDEVQLLES (157 aa)) enclose the NHR 1 domain. A Phosphothreonine modification is found at Thr-199. The NHR 2 domain maps to 279–433 (DLRFHATRGP…GVAGQLRLLG (155 aa)). Residues 436–493 (QSSPATTTPSGSLSGSQDDSDSDMTFSVNQSSSASESSLVTAPSSPLSPPVSPVFSPP) are disordered. The span at 462–480 (SVNQSSSASESSLVTAPSS) shows a compositional bias: low complexity. Residues 481-493 (PLSPPVSPVFSPP) are compositionally biased toward pro residues. Residues 503–543 (CTVCFDGEVDTVIYTCGHMCLCHSCGLRLKRQARACCPICR) form an RING-type zinc finger.

In terms of assembly, interacts with JAG1, DLL1 and DLL4. As to expression, highest expression in brain, prostate and small intestine. In the brain the levels are higher in fetal than in adult stage. In the adult brain the highest levels are detected in the olfactory system, cerebellar cortex, optic nerve and the frontal lobe.

It localises to the cytoplasm. The catalysed reaction is S-ubiquitinyl-[E2 ubiquitin-conjugating enzyme]-L-cysteine + [acceptor protein]-L-lysine = [E2 ubiquitin-conjugating enzyme]-L-cysteine + N(6)-ubiquitinyl-[acceptor protein]-L-lysine.. It participates in protein modification; protein ubiquitination. In terms of biological role, E3 ubiquitin-protein ligase involved in regulation of the Notch pathway through influencing the stability and activity of several Notch ligands. The protein is E3 ubiquitin-protein ligase NEURL1B (NEURL1B) of Homo sapiens (Human).